Reading from the N-terminus, the 862-residue chain is Protein PRQFV-amide (862 aa).

Residues 1 to 20 (MSSQLLICSVFVLFTFGPNS) form the signal peptide. Positions 21–79 (FPSCLAQEQAGNSDATQLSADAKAPESAKDKSGDVQNDGTKSVRSKRDLEIDFGSGDVQ) are excised as a propeptide. Residues 32–68 (NSDATQLSADAKAPESAKDKSGDVQNDGTKSVRSKRD) are disordered. Basic and acidic residues predominate over residues 43-53 (KAPESAKDKSG). The residue at position 86 (V86) is a Valine amide. A propeptide spanning residues 90 to 149 (AAPPVFQTPLVQDKISGFIPSETESPVIGEFAFPGSVFMDDEEALGAEEEPMDDEDLEFY) is cleaved from the precursor. V156 bears the Valine amide mark. The propeptide occupies 160–175 (GIDDYLLQEKLKDFIE). 9 positions are modified to valine amide: V182, V190, V198, V206, V214, V222, V230, V238, and V246. The propeptide occupies 250 to 259 (EADPSFLFED). V266 bears the Valine amide mark. Positions 270–300 (SLDFLGGANWYNPYDVTMEPQSEGSDLQGFS) are excised as a propeptide. V307 is subject to Valine amide. Positions 311 to 319 (DAFDMFEFS) are excised as a propeptide. V326 carries the valine amide modification. Positions 330 to 338 (DQDEMFDFS) are excised as a propeptide. V345 is modified (valine amide). The propeptide occupies 349-357 (DLQEFFDLS). Valine amide is present on V364. A propeptide spanning residues 368 to 376 (EFDDEIDFS) is cleaved from the precursor. At V383 the chain carries Valine amide. Positions 387-395 (ENDDDFDLS) are excised as a propeptide. Valine amide is present on V402. A propeptide spanning residues 406 to 414 (ENDDEFDLS) is cleaved from the precursor. V421 carries the valine amide modification. Over residues 424 to 434 (RENDDELEFSK) the composition is skewed to basic and acidic residues. The tract at residues 424-528 (RENDDELEFS…NNDDLDFSKR (105 aa)) is disordered. Residues 425 to 433 (ENDDELEFS) constitute a propeptide that is removed on maturation. V440 is subject to Valine amide. Positions 441 to 452 (GKREDDEIDFSK) are enriched in basic and acidic residues. The propeptide occupies 444-451 (EDDEIDFS). V458 carries the post-translational modification Valine amide. Over residues 459–471 (GKRENDGEIDFSK) the composition is skewed to basic and acidic residues. The propeptide occupies 462–470 (ENDGEIDFS). Valine amide is present on V477. Residues 478 to 490 (GKRENDDEIDFSK) are compositionally biased toward basic and acidic residues. Positions 481–489 (ENDDEIDFS) are excised as a propeptide. A Valine amide modification is found at V496. Residues 497 to 508 (GKREDGEIDFSK) show a composition bias toward basic and acidic residues. The propeptide occupies 500–507 (EDGEIDFS). Valine amide is present on V514. Residues 515 to 527 (GKRENNDDLDFSK) show a composition bias toward basic and acidic residues. A propeptide spanning residues 518-526 (ENNDDLDFS) is cleaved from the precursor. V533 is modified (valine amide). A propeptide spanning residues 537–545 (EVDDEIDFS) is cleaved from the precursor. The disordered stretch occupies residues 549-634 (RQFVGKREND…RQFVGKREND (86 aa)). A Valine amide modification is found at V552. Over residues 553–565 (GKRENDDDLDFSK) the composition is skewed to basic and acidic residues. The propeptide occupies 556–564 (ENDDDLDFS). A Valine amide modification is found at V571. The segment covering 572–584 (GKRENDDDLEFSK) has biased composition (basic and acidic residues). A propeptide spanning residues 575-583 (ENDDDLEFS) is cleaved from the precursor. V590 is subject to Valine amide. Positions 594-602 (ENDPLLDFS) are excised as a propeptide. Residue V609 is modified to Valine amide. The span at 610 to 622 (GKRENDDDLDFSK) shows a compositional bias: basic and acidic residues. A propeptide spanning residues 613-621 (ENDDDLDFS) is cleaved from the precursor. At V628 the chain carries Valine amide. Residues 632 to 640 (ENDPLIDFS) constitute a propeptide that is removed on maturation. The residue at position 647 (V647) is a Valine amide. The propeptide occupies 651 to 659 (ESDGDFELS). Valine amide is present on V666. Residues 670-677 (DVDGPGLS) constitute a propeptide that is removed on maturation. V684 carries the valine amide modification. Residues 688–695 (EDYDIDFA) constitute a propeptide that is removed on maturation. V702 is subject to Valine amide. A propeptide spanning residues 706-714 (GNEDEFEMS) is cleaved from the precursor. V721 bears the Valine amide mark. The propeptide occupies 724–757 (RNFEELDQDFLRHMHDILDKRIPQFVSLPSLTAA). Position 764 is a valine amide (V764). Residues 768–812 (SDAAFLETLRHLRDYVGGQDEQNVSEFSYQHPYPSDLNDVGLIQQ) constitute a propeptide that is removed on maturation. V819 is modified (valine amide). A propeptide spanning residues 823-862 (GGDVDDINTTYRLGDFVSQPMSFVEEPSWLCRQLNAFGIS) is cleaved from the precursor.

In terms of tissue distribution, expressed abundantly in the abdominal ganglion, much less in the pedal and cerebral ganglia, and rarely in the buccal and pleural ganglia.

It localises to the secreted. Functionally, PRQFV-amide may act as a modulator within the feeding system as well as in other systems of Aplysia. This Aplysia californica (California sea hare) protein is Protein PRQFV-amide.